A 779-amino-acid chain; its full sequence is Glutathione biosynthesis bifunctional protein GshAB (779 aa).

The interval 1–346 (MAFSKNILDS…ETANRNQEQA (346 aa)) is glutamate--cysteine ligase. The ATP-grasp domain maps to 512 to 768 (KKILDQAGIN…LDDKILDALG (257 aa)). 539-597 (PYYRGRAIVIKPKSTNFGIGITIIKENNRHDFFAQGIAQAFKHEATVLIENFSSGKEYR) contacts ATP. Mg(2+) contacts are provided by D719, E738, and N740. D719, E738, and N740 together coordinate Mn(2+).

The protein in the N-terminal section; belongs to the glutamate--cysteine ligase type 1 family. Type 2 subfamily. In terms of assembly, monomer. It depends on Mg(2+) as a cofactor. The cofactor is Mn(2+).

The catalysed reaction is L-cysteine + L-glutamate + ATP = gamma-L-glutamyl-L-cysteine + ADP + phosphate + H(+). It carries out the reaction gamma-L-glutamyl-L-cysteine + glycine + ATP = glutathione + ADP + phosphate + H(+). Its pathway is sulfur metabolism; glutathione biosynthesis; glutathione from L-cysteine and L-glutamate: step 1/2. It participates in sulfur metabolism; glutathione biosynthesis; glutathione from L-cysteine and L-glutamate: step 2/2. Its function is as follows. Synthesizes glutathione from L-glutamate and L-cysteine via gamma-L-glutamyl-L-cysteine. The polypeptide is Glutathione biosynthesis bifunctional protein GshAB (Desulfotalea psychrophila (strain LSv54 / DSM 12343)).